Here is a 483-residue protein sequence, read N- to C-terminus: Glycogen synthase (483 aa).

Lysine 15 is an ADP-alpha-D-glucose binding site.

The protein belongs to the glycosyltransferase 1 family. Bacterial/plant glycogen synthase subfamily.

It catalyses the reaction [(1-&gt;4)-alpha-D-glucosyl](n) + ADP-alpha-D-glucose = [(1-&gt;4)-alpha-D-glucosyl](n+1) + ADP + H(+). Its pathway is glycan biosynthesis; glycogen biosynthesis. Synthesizes alpha-1,4-glucan chains using ADP-glucose. The protein is Glycogen synthase of Petrotoga mobilis (strain DSM 10674 / SJ95).